Reading from the N-terminus, the 313-residue chain is D-alanine--D-alanine ligase (313 aa).

One can recognise an ATP-grasp domain in the interval 108 to 308; it reads KLVWQQLGIP…YQELVVKVLA (201 aa). An ATP-binding site is contributed by 138 to 193; that stretch reads VAKLGLPLFVKPASEGSSVAVIKVKTADALVPALEEAVKFDKIVVVEKSIEGGGEY. Mg(2+)-binding residues include D262, E275, and N277.

The protein belongs to the D-alanine--D-alanine ligase family. It depends on Mg(2+) as a cofactor. Mn(2+) serves as cofactor.

The protein resides in the cytoplasm. The catalysed reaction is 2 D-alanine + ATP = D-alanyl-D-alanine + ADP + phosphate + H(+). Its pathway is cell wall biogenesis; peptidoglycan biosynthesis. In terms of biological role, cell wall formation. The polypeptide is D-alanine--D-alanine ligase (Paraburkholderia phymatum (strain DSM 17167 / CIP 108236 / LMG 21445 / STM815) (Burkholderia phymatum)).